The chain runs to 506 residues: Aminoaldehyde dehydrogenase 2 (506 aa).

Asp101 contacts Na(+). NAD(+)-binding positions include 161 to 163 (TPW) and 187 to 190 (KPSE). Leu191 lines the Na(+) pocket. Residues 241–244 (STET) and Glu262 each bind NAD(+). Residue Glu262 is the Proton acceptor of the active site. The active-site Nucleophile is the Cys297. NAD(+) is bound by residues Glu396 and Trp462.

This sequence belongs to the aldehyde dehydrogenase family.

The catalysed reaction is 4-aminobutanal + NAD(+) + H2O = 4-aminobutanoate + NADH + 2 H(+). It carries out the reaction 3-aminopropanal + NAD(+) + H2O = beta-alanine + NADH + 2 H(+). The enzyme catalyses 4-(trimethylamino)butanal + NAD(+) + H2O = 4-(trimethylamino)butanoate + NADH + 2 H(+). It catalyses the reaction 4-guanidinobutanal + NAD(+) + H2O = 4-guanidinobutanoate + NADH + 2 H(+). Its pathway is amine and polyamine biosynthesis; betaine biosynthesis via choline pathway; betaine from betaine aldehyde: step 1/1. In terms of biological role, dehydrogenase that catalyzes the oxidation of several aminoaldehydes. Metabolizes and detoxifies aldehyde products of polyamine degradation to non-toxic amino acids. Catalyzes the oxidation of 4-aminobutanal and 3-aminopropanal to 4-aminobutanoate and beta-alanine, respectively. Catalyzes the oxidation of 4-(trimethylamino)butanal and 4-guanidinobutanal to 4-trimethylammoniobutanoate and 4-guanidinobutanoate, respectively. The protein is Aminoaldehyde dehydrogenase 2 of Zea mays (Maize).